A 483-amino-acid polypeptide reads, in one-letter code: Wax ester synthase/diacylglycerol acyltransferase 10 (483 aa).

The Cytoplasmic portion of the chain corresponds to 1–203 (MTKEEVEEEP…SINAVYYAVR (203 aa)). H143 functions as the Proton acceptor in the catalytic mechanism. Residues 204–222 (LIWNTIVDLLLLWATSLFF) traverse the membrane as a helical segment. Topologically, residues 223–483 (KDTETPISEG…MKDTLSGKSD (261 aa)) are lumenal. Residues N394 and N399 are each glycosylated (N-linked (GlcNAc...) asparagine).

The protein in the N-terminal section; belongs to the long-chain O-acyltransferase family. As to expression, mostly expressed in roots.

Its subcellular location is the cell membrane. The protein localises to the endoplasmic reticulum membrane. It carries out the reaction an acyl-CoA + a 1,2-diacyl-sn-glycerol = a triacyl-sn-glycerol + CoA. The catalysed reaction is a long chain fatty alcohol + a fatty acyl-CoA = a wax ester + CoA. The protein operates within glycerolipid metabolism; triacylglycerol biosynthesis. It functions in the pathway lipid metabolism. Bifunctional wax ester synthase/diacylglycerol acyltransferase. Involved in cuticular wax biosynthesis. The polypeptide is Wax ester synthase/diacylglycerol acyltransferase 10 (Arabidopsis thaliana (Mouse-ear cress)).